The chain runs to 250 residues: Probable E3 ubiquitin-protein ligase RHY1A (250 aa).

Residues 1–10 (MTSASELFST) show a composition bias toward polar residues. Positions 1–106 (MTSASELFST…ETQSSSFVNL (106 aa)) are disordered. Residues 29 to 47 (YRHHSHHHHRRHGVHHHNQ) are compositionally biased toward basic residues. Residues 48-58 (RHDSDGCDPLR) show a composition bias toward basic and acidic residues. Over residues 60 to 69 (PTPRLRRFFH) the composition is skewed to basic residues. Residues 71-80 (PIQERSRPIR) show a composition bias toward basic and acidic residues. Low complexity predominate over residues 91 to 102 (TDSTDTETQSSS). An RING-type; atypical zinc finger spans residues 203–244 (CSICLESFTKGDMLISLPCTHSFHSSCLNPWLRACGDCPCCR).

The enzyme catalyses S-ubiquitinyl-[E2 ubiquitin-conjugating enzyme]-L-cysteine + [acceptor protein]-L-lysine = [E2 ubiquitin-conjugating enzyme]-L-cysteine + N(6)-ubiquitinyl-[acceptor protein]-L-lysine.. The protein operates within protein modification; protein ubiquitination. In terms of biological role, probable E3 ubiquitin-protein ligase that may possess E3 ubiquitin ligase activity in vitro. In Arabidopsis thaliana (Mouse-ear cress), this protein is Probable E3 ubiquitin-protein ligase RHY1A.